Reading from the N-terminus, the 423-residue chain is Glucose-1-phosphate adenylyltransferase (423 aa).

Residues tyrosine 98, glycine 163, 178-179 (EK), and serine 189 each bind alpha-D-glucose 1-phosphate.

This sequence belongs to the bacterial/plant glucose-1-phosphate adenylyltransferase family. As to quaternary structure, homotetramer.

It catalyses the reaction alpha-D-glucose 1-phosphate + ATP + H(+) = ADP-alpha-D-glucose + diphosphate. It functions in the pathway glycan biosynthesis; glycogen biosynthesis. Its function is as follows. Involved in the biosynthesis of ADP-glucose, a building block required for the elongation reactions to produce glycogen. Catalyzes the reaction between ATP and alpha-D-glucose 1-phosphate (G1P) to produce pyrophosphate and ADP-Glc. The chain is Glucose-1-phosphate adenylyltransferase from Thermotoga maritima (strain ATCC 43589 / DSM 3109 / JCM 10099 / NBRC 100826 / MSB8).